A 393-amino-acid chain; its full sequence is 4-hydroxyphenylpyruvate dioxygenase (393 aa).

2 VOC domains span residues 17 to 148 (AFDH…LLER) and 179 to 339 (FLDH…IFSK). Residues H182, H267, and E350 each coordinate Fe cation.

The protein belongs to the 4HPPD family. Fe cation serves as cofactor. Expressed in the hypodermis and intestine.

It carries out the reaction 3-(4-hydroxyphenyl)pyruvate + O2 = homogentisate + CO2. It functions in the pathway amino-acid degradation; L-phenylalanine degradation; acetoacetate and fumarate from L-phenylalanine: step 3/6. In terms of biological role, key enzyme in the degradation of tyrosine. The chain is 4-hydroxyphenylpyruvate dioxygenase from Caenorhabditis elegans.